The primary structure comprises 520 residues: Cobyric acid synthase (520 aa).

In terms of domain architecture, GATase cobBQ-type spans Glu254–Leu465. Cys335 acts as the Nucleophile in catalysis. His457 is an active-site residue.

It belongs to the CobB/CobQ family. CobQ subfamily.

The protein operates within cofactor biosynthesis; adenosylcobalamin biosynthesis. Its function is as follows. Catalyzes amidations at positions B, D, E, and G on adenosylcobyrinic A,C-diamide. NH(2) groups are provided by glutamine, and one molecule of ATP is hydrogenolyzed for each amidation. In Sorangium cellulosum (strain So ce56) (Polyangium cellulosum (strain So ce56)), this protein is Cobyric acid synthase.